We begin with the raw amino-acid sequence, 290 residues long: Glutamate racemase (290 aa).

Residues 32–33 (DS) and 64–65 (YG) contribute to the substrate site. Catalysis depends on C96, which acts as the Proton donor/acceptor. 97 to 98 (NT) provides a ligand contact to substrate. C208 serves as the catalytic Proton donor/acceptor. 209-210 (TH) provides a ligand contact to substrate.

This sequence belongs to the aspartate/glutamate racemases family.

It carries out the reaction L-glutamate = D-glutamate. It functions in the pathway cell wall biogenesis; peptidoglycan biosynthesis. Provides the (R)-glutamate required for cell wall biosynthesis. The chain is Glutamate racemase from Sodalis glossinidius (strain morsitans).